The sequence spans 382 residues: S-adenosylmethionine synthase (382 aa).

Position 15 (His15) interacts with ATP. Mg(2+) is bound at residue Asp17. Glu43 contributes to the K(+) binding site. L-methionine-binding residues include Glu56 and Gln99. A flexible loop region spans residues Gln99–Arg109. Residues Asp164 to Lys166, Arg230 to Phe231, Asp239, Arg245 to Lys246, Ala262, and Lys266 contribute to the ATP site. Asp239 is a binding site for L-methionine. Residue Lys270 participates in L-methionine binding.

It belongs to the AdoMet synthase family. Homotetramer; dimer of dimers. The cofactor is Mg(2+). K(+) is required as a cofactor.

The protein localises to the cytoplasm. It catalyses the reaction L-methionine + ATP + H2O = S-adenosyl-L-methionine + phosphate + diphosphate. The protein operates within amino-acid biosynthesis; S-adenosyl-L-methionine biosynthesis; S-adenosyl-L-methionine from L-methionine: step 1/1. In terms of biological role, catalyzes the formation of S-adenosylmethionine (AdoMet) from methionine and ATP. The overall synthetic reaction is composed of two sequential steps, AdoMet formation and the subsequent tripolyphosphate hydrolysis which occurs prior to release of AdoMet from the enzyme. The polypeptide is S-adenosylmethionine synthase (Glaesserella parasuis serovar 5 (strain SH0165) (Haemophilus parasuis)).